The sequence spans 367 residues: Heme A synthase (367 aa).

8 helical membrane passes run 25-45, 111-131, 139-159, 174-194, 210-230, 272-292, 305-325, and 327-347; these read ALRLWLGFVLLALFCLVLVGG, LIARGIGVIFALPLLYFWLTG, WPLVGILALGALQGFIGWWMV, LATHLVMACLIFAGCMWIMRG, GLAAAIAVFALFQIYLGALVA, FIHRIGAYTLFALVLINMVIA, AVLLFALVTVQAAIGVATLLM, and VPLHWGLLHQAGALVVFGFAV. His274 is a heme binding site. Residue His335 coordinates heme.

This sequence belongs to the COX15/CtaA family. Type 2 subfamily. Interacts with CtaB. Heme b serves as cofactor.

It is found in the cell membrane. The enzyme catalyses Fe(II)-heme o + 2 A + H2O = Fe(II)-heme a + 2 AH2. It functions in the pathway porphyrin-containing compound metabolism; heme A biosynthesis; heme A from heme O: step 1/1. Functionally, catalyzes the conversion of heme O to heme A by two successive hydroxylations of the methyl group at C8. The first hydroxylation forms heme I, the second hydroxylation results in an unstable dihydroxymethyl group, which spontaneously dehydrates, resulting in the formyl group of heme A. This chain is Heme A synthase, found in Rhizobium etli (strain ATCC 51251 / DSM 11541 / JCM 21823 / NBRC 15573 / CFN 42).